The sequence spans 378 residues: Mannitol-1-phosphate 5-dehydrogenase (378 aa).

Residue 4 to 15 (SVHFGAGNIGRG) coordinates NAD(+).

It belongs to the mannitol dehydrogenase family.

The enzyme catalyses D-mannitol 1-phosphate + NAD(+) = beta-D-fructose 6-phosphate + NADH + H(+). This chain is Mannitol-1-phosphate 5-dehydrogenase, found in Streptococcus pneumoniae (strain 70585).